We begin with the raw amino-acid sequence, 130 residues long: Insulin-like growth factor 1 (130 aa).

An N-terminal signal peptide occupies residues 1-25 (MHAVSSSHLFYLAFCLLVLTSSATA). The tract at residues 26 to 54 (GPETLCGAELVDALQFVCGDRGFYFNKPT) is b. Intrachain disulfides connect Cys-31–Cys-73, Cys-43–Cys-86, and Cys-72–Cys-77. Positions 55 to 66 (GYGSSSRRAPQT) are c. Residues 67–87 (GIVDECCFRSCDLRRLEMYCA) are a. The interval 88–95 (PLKPAKSA) is d. Positions 96 to 130 (RSVRAQRHTDMPKTQKEVHLKNASRGSAGNKNYRM) are cleaved as a propeptide — e peptide. The segment at 97-130 (SVRAQRHTDMPKTQKEVHLKNASRGSAGNKNYRM) is disordered. Basic and acidic residues predominate over residues 102-115 (RHTDMPKTQKEVHL). The span at 119–130 (SRGSAGNKNYRM) shows a compositional bias: polar residues.

The protein belongs to the insulin family. Forms a ternary complex with IGFR1 and ITGAV:ITGB3. Forms a ternary complex with IGFR1 and ITGA6:ITGB4. Forms a ternary complex with IGFBP3 and ALS.

The protein localises to the secreted. Functionally, the insulin-like growth factors, isolated from plasma, are structurally and functionally related to insulin but have a much higher growth-promoting activity. May be a physiological regulator of [1-14C]-2-deoxy-D-glucose (2DG) transport and glycogen synthesis in osteoblasts. Stimulates glucose transport in bone-derived osteoblastic (PyMS) cells and is effective at much lower concentrations than insulin, not only regarding glycogen and DNA synthesis but also with regard to enhancing glucose uptake. May play a role in synapse maturation. Ca(2+)-dependent exocytosis of IGF1 is required for sensory perception of smell in the olfactory bulb. Acts as a ligand for IGF1R. Binds to the alpha subunit of IGF1R, leading to the activation of the intrinsic tyrosine kinase activity which autophosphorylates tyrosine residues in the beta subunit thus initiating a cascade of down-stream signaling events leading to activation of the PI3K-AKT/PKB and the Ras-MAPK pathways. Binds to integrins ITGAV:ITGB3 and ITGA6:ITGB4. Its binding to integrins and subsequent ternary complex formation with integrins and IGFR1 are essential for IGF1 signaling. Induces the phosphorylation and activation of IGFR1, MAPK3/ERK1, MAPK1/ERK2 and AKT1. As part of the MAPK/ERK signaling pathway, acts as a negative regulator of apoptosis in cardiomyocytes via promotion of STUB1/CHIP-mediated ubiquitination and degradation of ICER-type isoforms of CREM. This chain is Insulin-like growth factor 1, found in Cavia porcellus (Guinea pig).